The following is a 328-amino-acid chain: Carbonic anhydrase-related protein 11 (328 aa).

Residues 1 to 22 (MGAAARLSAPRALVLWAALGAA) form the signal peptide. An Alpha-carbonic anhydrase domain is found at 33-303 (DWWSYKDNLQ…LAHRALRGNR (271 aa)). N-linked (GlcNAc...) asparagine glycans are attached at residues N118, N170, and N260. A disordered region spans residues 300–328 (RGNRDPRHPERRCRGPNYRLHVDGAPHGR). Over residues 319–328 (LHVDGAPHGR) the composition is skewed to basic and acidic residues.

This sequence belongs to the alpha-carbonic anhydrase family.

Its subcellular location is the secreted. Does not have a catalytic activity. The polypeptide is Carbonic anhydrase-related protein 11 (CA11) (Bos taurus (Bovine)).